The following is a 264-amino-acid chain: 3-methyl-2-oxobutanoate hydroxymethyltransferase (264 aa).

Mg(2+)-binding residues include D45 and D84. Residues 45–46, D84, and K112 each bind 3-methyl-2-oxobutanoate; that span reads DS. E114 contacts Mg(2+). Residue E181 is the Proton acceptor of the active site.

Belongs to the PanB family. In terms of assembly, homodecamer; pentamer of dimers. Mg(2+) serves as cofactor.

It localises to the cytoplasm. It carries out the reaction 3-methyl-2-oxobutanoate + (6R)-5,10-methylene-5,6,7,8-tetrahydrofolate + H2O = 2-dehydropantoate + (6S)-5,6,7,8-tetrahydrofolate. The protein operates within cofactor biosynthesis; (R)-pantothenate biosynthesis; (R)-pantoate from 3-methyl-2-oxobutanoate: step 1/2. Catalyzes the reversible reaction in which hydroxymethyl group from 5,10-methylenetetrahydrofolate is transferred onto alpha-ketoisovalerate to form ketopantoate. This is 3-methyl-2-oxobutanoate hydroxymethyltransferase from Shewanella sediminis (strain HAW-EB3).